Consider the following 712-residue polypeptide: Sterol uptake control protein 2 (712 aa).

The segment covering Met1–Phe19 has biased composition (polar residues). The disordered stretch occupies residues Met1–Asn52. Positions Lys35–Ser50 are enriched in basic residues. The segment at residues Cys54–Cys81 is a DNA-binding region (zn(2)-C6 fungal-type). Disordered stretches follow at residues Lys95–Pro150 and Thr236–Leu342. Polar residues-rich tracts occupy residues Ser113–Lys143, Arg252–Pro306, and Lys326–Ile337.

The protein resides in the nucleus. Functionally, transcription factor involved in the regulation of ergosterol biosynthetic genes such as ERG2 and ERG11 through direct binding to sterol response elements (SREs) in the promoters. Also binds to its own promoter on 2 cis-acting elements to promote autoregulation. Regulates sterol uptake across the plasma membrane. Acts as a major regulator of ascorbic acid-induced response. Plays a role in the triggering of pyroptosis, an inflammasome-mediated programmed cell death pathway in macrophages, allowing macrophages escaping. The polypeptide is Sterol uptake control protein 2 (Candida albicans (strain SC5314 / ATCC MYA-2876) (Yeast)).